Consider the following 360-residue polypeptide: 3-dehydroquinate synthase (360 aa).

Residues 71–76 (DGEQYK), 105–109 (GVIGD), 129–130 (TT), Lys142, Lys151, and 169–172 (CLDT) each bind NAD(+). Zn(2+) contacts are provided by Glu184, His247, and His264.

Belongs to the sugar phosphate cyclases superfamily. Dehydroquinate synthase family. Requires Co(2+) as cofactor. Zn(2+) is required as a cofactor. NAD(+) serves as cofactor.

The protein resides in the cytoplasm. The catalysed reaction is 7-phospho-2-dehydro-3-deoxy-D-arabino-heptonate = 3-dehydroquinate + phosphate. It participates in metabolic intermediate biosynthesis; chorismate biosynthesis; chorismate from D-erythrose 4-phosphate and phosphoenolpyruvate: step 2/7. Its function is as follows. Catalyzes the conversion of 3-deoxy-D-arabino-heptulosonate 7-phosphate (DAHP) to dehydroquinate (DHQ). The protein is 3-dehydroquinate synthase of Erwinia tasmaniensis (strain DSM 17950 / CFBP 7177 / CIP 109463 / NCPPB 4357 / Et1/99).